Reading from the N-terminus, the 436-residue chain is Adenylosuccinate synthetase (436 aa).

Residues 13 to 19 (GDEGKGK) and 41 to 43 (GHT) each bind GTP. D14 functions as the Proton acceptor in the catalytic mechanism. Mg(2+) is bound by residues D14 and G41. Residues 14-17 (DEGK), 39-42 (NAGH), T130, R144, Q225, T240, and R304 each bind IMP. H42 functions as the Proton donor in the catalytic mechanism. 300 to 306 (ATTGRSR) lines the substrate pocket. Residues R306, 332 to 334 (KLD), and 415 to 417 (STG) contribute to the GTP site.

The protein belongs to the adenylosuccinate synthetase family. As to quaternary structure, homodimer. Mg(2+) is required as a cofactor.

The protein resides in the cytoplasm. It carries out the reaction IMP + L-aspartate + GTP = N(6)-(1,2-dicarboxyethyl)-AMP + GDP + phosphate + 2 H(+). Its pathway is purine metabolism; AMP biosynthesis via de novo pathway; AMP from IMP: step 1/2. Functionally, plays an important role in the de novo pathway of purine nucleotide biosynthesis. Catalyzes the first committed step in the biosynthesis of AMP from IMP. This Hamiltonella defensa subsp. Acyrthosiphon pisum (strain 5AT) protein is Adenylosuccinate synthetase.